The primary structure comprises 217 residues: 3,4-dihydroxy-2-butanone 4-phosphate synthase (217 aa).

Residues 37–38, Asp-42, 150–154, and Glu-174 contribute to the D-ribulose 5-phosphate site; these read RE and RRGHT. Mg(2+) is bound at residue Glu-38. His-153 provides a ligand contact to Mg(2+).

Belongs to the DHBP synthase family. As to quaternary structure, homodimer. Mg(2+) serves as cofactor. It depends on Mn(2+) as a cofactor.

It carries out the reaction D-ribulose 5-phosphate = (2S)-2-hydroxy-3-oxobutyl phosphate + formate + H(+). It participates in cofactor biosynthesis; riboflavin biosynthesis; 2-hydroxy-3-oxobutyl phosphate from D-ribulose 5-phosphate: step 1/1. Its function is as follows. Catalyzes the conversion of D-ribulose 5-phosphate to formate and 3,4-dihydroxy-2-butanone 4-phosphate. This Shewanella sp. (strain MR-4) protein is 3,4-dihydroxy-2-butanone 4-phosphate synthase.